We begin with the raw amino-acid sequence, 157 residues long: Transcriptional repressor NrdR (157 aa).

A zinc finger lies at 3 to 34; it reads CPFCNTVDTKVIDSRLVSEGSQIKRRRQCAIC. Residues 49–139 form the ATP-cone domain; that stretch reads PRVIKNDDLL…VYRSFEDVRE (91 aa).

This sequence belongs to the NrdR family. Zn(2+) serves as cofactor.

In terms of biological role, negatively regulates transcription of bacterial ribonucleotide reductase nrd genes and operons by binding to NrdR-boxes. In Hamiltonella defensa subsp. Acyrthosiphon pisum (strain 5AT), this protein is Transcriptional repressor NrdR.